Consider the following 89-residue polypeptide: Large ribosomal subunit protein uL23c (89 aa).

It belongs to the universal ribosomal protein uL23 family. As to quaternary structure, part of the 50S ribosomal subunit.

The protein resides in the plastid. Its subcellular location is the chloroplast. Binds to 23S rRNA. This chain is Large ribosomal subunit protein uL23c (rpl23), found in Staurastrum punctulatum (Green alga).